The primary structure comprises 750 residues: Photosystem I P700 chlorophyll a apoprotein A1 (750 aa).

Helical transmembrane passes span Val-70–Ala-93, Leu-156–His-179, Leu-195–Leu-219, Ile-291–Tyr-309, Trp-346–Tyr-369, Leu-385–Val-411, Ala-433–His-455, and Phe-531–Leu-549. Residues Cys-573 and Cys-582 each contribute to the [4Fe-4S] cluster site. 2 consecutive transmembrane segments (helical) span residues His-589–Trp-610 and Leu-664–Phe-686. Position 675 (His-675) interacts with chlorophyll a'. Chlorophyll a contacts are provided by Met-683 and Tyr-691. Position 692 (Trp-692) interacts with phylloquinone. Residues Ala-724–Ala-744 traverse the membrane as a helical segment.

It belongs to the PsaA/PsaB family. In terms of assembly, the PsaA/B heterodimer binds the P700 chlorophyll special pair and subsequent electron acceptors. PSI consists of a core antenna complex that captures photons, and an electron transfer chain that converts photonic excitation into a charge separation. The eukaryotic PSI reaction center is composed of at least 11 subunits. P700 is a chlorophyll a/chlorophyll a' dimer, A0 is one or more chlorophyll a, A1 is one or both phylloquinones and FX is a shared 4Fe-4S iron-sulfur center. is required as a cofactor.

It is found in the plastid. It localises to the chloroplast thylakoid membrane. The enzyme catalyses reduced [plastocyanin] + hnu + oxidized [2Fe-2S]-[ferredoxin] = oxidized [plastocyanin] + reduced [2Fe-2S]-[ferredoxin]. Its function is as follows. PsaA and PsaB bind P700, the primary electron donor of photosystem I (PSI), as well as the electron acceptors A0, A1 and FX. PSI is a plastocyanin-ferredoxin oxidoreductase, converting photonic excitation into a charge separation, which transfers an electron from the donor P700 chlorophyll pair to the spectroscopically characterized acceptors A0, A1, FX, FA and FB in turn. Oxidized P700 is reduced on the lumenal side of the thylakoid membrane by plastocyanin. The sequence is that of Photosystem I P700 chlorophyll a apoprotein A1 from Crucihimalaya wallichii (Rock-cress).